Here is a 128-residue protein sequence, read N- to C-terminus: Small ribosomal subunit protein uS13 (128 aa).

The segment at 98 to 128 is disordered; sequence VRGQRTRTNARTRKGPRPRIGVKKKGKQAGS. Residues 101–128 are compositionally biased toward basic residues; sequence QRTRTNARTRKGPRPRIGVKKKGKQAGS.

It belongs to the universal ribosomal protein uS13 family. As to quaternary structure, part of the 30S ribosomal subunit. Forms a loose heterodimer with protein S19. Forms two bridges to the 50S subunit in the 70S ribosome.

In terms of biological role, located at the top of the head of the 30S subunit, it contacts several helices of the 16S rRNA. In the 70S ribosome it contacts the 23S rRNA (bridge B1a) and protein L5 of the 50S subunit (bridge B1b), connecting the 2 subunits; these bridges are implicated in subunit movement. Contacts the tRNAs in the A and P-sites. In Thermomicrobium roseum (strain ATCC 27502 / DSM 5159 / P-2), this protein is Small ribosomal subunit protein uS13.